The following is a 777-amino-acid chain: Phosphoribosylformylglycinamidine synthase subunit PurL (777 aa).

The active site involves histidine 50. Residues tyrosine 53 and lysine 92 each coordinate ATP. Residue glutamate 94 participates in Mg(2+) binding. Residues 95–98 (SHNH) and arginine 117 each bind substrate. The active-site Proton acceptor is histidine 96. Aspartate 118 lines the Mg(2+) pocket. Glutamine 241 contacts substrate. Aspartate 269 lines the Mg(2+) pocket. 313 to 315 (ESQ) contacts substrate. The ATP site is built by aspartate 516 and glycine 553. Asparagine 554 contributes to the Mg(2+) binding site. Residue serine 556 coordinates substrate.

The protein belongs to the FGAMS family. As to quaternary structure, monomer. Part of the FGAM synthase complex composed of 1 PurL, 1 PurQ and 2 PurS subunits.

The protein resides in the cytoplasm. The catalysed reaction is N(2)-formyl-N(1)-(5-phospho-beta-D-ribosyl)glycinamide + L-glutamine + ATP + H2O = 2-formamido-N(1)-(5-O-phospho-beta-D-ribosyl)acetamidine + L-glutamate + ADP + phosphate + H(+). It functions in the pathway purine metabolism; IMP biosynthesis via de novo pathway; 5-amino-1-(5-phospho-D-ribosyl)imidazole from N(2)-formyl-N(1)-(5-phospho-D-ribosyl)glycinamide: step 1/2. In terms of biological role, part of the phosphoribosylformylglycinamidine synthase complex involved in the purines biosynthetic pathway. Catalyzes the ATP-dependent conversion of formylglycinamide ribonucleotide (FGAR) and glutamine to yield formylglycinamidine ribonucleotide (FGAM) and glutamate. The FGAM synthase complex is composed of three subunits. PurQ produces an ammonia molecule by converting glutamine to glutamate. PurL transfers the ammonia molecule to FGAR to form FGAM in an ATP-dependent manner. PurS interacts with PurQ and PurL and is thought to assist in the transfer of the ammonia molecule from PurQ to PurL. The chain is Phosphoribosylformylglycinamidine synthase subunit PurL from Synechococcus elongatus (strain ATCC 33912 / PCC 7942 / FACHB-805) (Anacystis nidulans R2).